The sequence spans 480 residues: Protein nucleotidyltransferase YdiU (480 aa).

Residues G86, G88, R89, K109, D121, G122, R172, and R179 each coordinate ATP. The active-site Proton acceptor is D248. N249 and D258 together coordinate Mg(2+). Residue D258 coordinates ATP.

The protein belongs to the SELO family. Requires Mg(2+) as cofactor. It depends on Mn(2+) as a cofactor.

It catalyses the reaction L-seryl-[protein] + ATP = 3-O-(5'-adenylyl)-L-seryl-[protein] + diphosphate. It carries out the reaction L-threonyl-[protein] + ATP = 3-O-(5'-adenylyl)-L-threonyl-[protein] + diphosphate. The enzyme catalyses L-tyrosyl-[protein] + ATP = O-(5'-adenylyl)-L-tyrosyl-[protein] + diphosphate. The catalysed reaction is L-histidyl-[protein] + UTP = N(tele)-(5'-uridylyl)-L-histidyl-[protein] + diphosphate. It catalyses the reaction L-seryl-[protein] + UTP = O-(5'-uridylyl)-L-seryl-[protein] + diphosphate. It carries out the reaction L-tyrosyl-[protein] + UTP = O-(5'-uridylyl)-L-tyrosyl-[protein] + diphosphate. Nucleotidyltransferase involved in the post-translational modification of proteins. It can catalyze the addition of adenosine monophosphate (AMP) or uridine monophosphate (UMP) to a protein, resulting in modifications known as AMPylation and UMPylation. The chain is Protein nucleotidyltransferase YdiU from Salmonella newport (strain SL254).